The following is a 235-amino-acid chain: MKYKRILLKLSGEALMGDRQYGIDPKRLAEYADEIKQIHDLGVQIAIVIGGGNIFRGIAGASNGMDRVQGDYMGMLATVINGMALQGALEEKGMLTRLQTALKIEAIAEPYIKRRAVRHLEKNRIVIFGAGTGNPYFTTDTAAVLRGVEVDADVILKGTRVDGIYNVDPEKNKDAVKFDNISFEDVLKKGLNVMDTTAFTLSQENKLPIIVFDMNKEGNLLKICKGENIGTVVNI.

9–12 (KLSG) is an ATP binding site. Gly-51 provides a ligand contact to UMP. The ATP site is built by Gly-52 and Arg-56. Residues Asp-71 and 132 to 139 (TGNPYFTT) contribute to the UMP site. Residues Thr-159, Tyr-165, and Asp-168 each coordinate ATP.

This sequence belongs to the UMP kinase family. In terms of assembly, homohexamer.

The protein localises to the cytoplasm. It carries out the reaction UMP + ATP = UDP + ADP. It participates in pyrimidine metabolism; CTP biosynthesis via de novo pathway; UDP from UMP (UMPK route): step 1/1. With respect to regulation, inhibited by UTP. In terms of biological role, catalyzes the reversible phosphorylation of UMP to UDP. In Flavobacterium psychrophilum (strain ATCC 49511 / DSM 21280 / CIP 103535 / JIP02/86), this protein is Uridylate kinase.